Reading from the N-terminus, the 586-residue chain is MLQKFISKSNQSLLMRLLAENFKHQAPWYGIAIGSMVVVAVMTSASAWIMRDVVNSTVVSKDIEKVFGVAVTVAIIFAVKGLATYVQSIFLSKAGNNIIAHTQRRLFEHVLRQGLSFYSIYPSSELLVRLTNNAQAVRSVIELVVTSFIRDLFSLMGLLAVMVIQQPLLSLVSAAVGPGAILGVRVLTRKVRKIMELEIASIGQIIQSVQETSTGIRIVKAFALEDFMRRRMDKYIGDVERRANSIARLEAASSPIMETLSGFAIAGVIALSGVLVLQQGNTPGELMSFITALLLAYEPAKRLARMRISLESALVGVRMMYQLADHPIELTEKNSAIPLPEGPGEIRFKDVNFSYKNGERLFQNLNVTFPAGKTTALVGPSGAGKSSIINLIMRLYDPDVGSVTVDGHDLKDVTFRSLRDRIGFVGQDTFLFSGTIKYNISLGREGASDEEIIEAAKTANAHDFIMKMPHGYDTEVGENGIKLSGGQKQRITIARAMLRNAEILIFDEATSALDSESEIQIRQALARLTRKRTTIMIAHRLSTVTAADNIVVMEGGQVAEQGPQGRLLSQDGVYRRLYELQLLPSA.

Residues 29–312 (YGIAIGSMVV…LARMRISLES (284 aa)) enclose the ABC transmembrane type-1 domain. The next 4 membrane-spanning stretches (helical) occupy residues 30 to 50 (GIAI…AWIM), 66 to 86 (VFGV…ATYV), 162 to 184 (MVIQ…ILGV), and 256 to 276 (IMET…GVLV). An ABC transporter domain is found at 346–580 (IRFKDVNFSY…DGVYRRLYEL (235 aa)). 379–386 (GPSGAGKS) is an ATP binding site.

Belongs to the ABC transporter superfamily.

Its subcellular location is the cell membrane. This is an uncharacterized protein from Sinorhizobium fredii (strain NBRC 101917 / NGR234).